Reading from the N-terminus, the 66-residue chain is Alpha-like toxin Bom3 (66 aa).

The LCN-type CS-alpha/beta domain occupies 2–66; that stretch reads RDGYIAQPEN…PIVVGGEKCH (65 aa). 4 disulfide bridges follow: C12-C65, C16-C37, C23-C47, and C27-C49.

It belongs to the long (4 C-C) scorpion toxin superfamily. Sodium channel inhibitor family. Alpha subfamily. In terms of tissue distribution, expressed by the venom gland.

It localises to the secreted. Its function is as follows. Alpha toxins bind voltage-independently at site-3 of sodium channels (Nav) and inhibit the inactivation of the activated channels, thereby blocking neuronal transmission. As it competes neither with the classical alpha-toxin AaH2 nor the beta-toxin Css2, this toxin is an alpha-like toxin. The chain is Alpha-like toxin Bom3 from Buthus occitanus mardochei (Moroccan scorpion).